The sequence spans 340 residues: 4-dimethylallyltryptophan N-methyltransferase ifgB (340 aa).

This sequence belongs to the methyltransferase superfamily. Homodimer.

It carries out the reaction 4-(3-methylbut-2-enyl)-L-tryptophan + S-adenosyl-L-methionine = 4-(3-methylbut-2-enyl)-L-abrine + S-adenosyl-L-homocysteine + H(+). It participates in alkaloid biosynthesis; ergot alkaloid biosynthesis. 4-dimethylallyltryptophan N-methyltransferase; part of the gene cluster that mediates the biosynthesis of isofumigaclavines, fungal ergot alkaloids. The tryptophan dimethylallyltransferase ifgA catalyzes the first step of ergot alkaloid biosynthesis by condensing dimethylallyl diphosphate (DMAP) and tryptophan to form 4-dimethylallyl-L-tryptophan. The second step is catalyzed by the methyltransferase ifgB that methylates 4-dimethylallyl-L-tryptophan in the presence of S-adenosyl-L-methionine, resulting in the formation of N-methyl-dimethylallyl-L-tryptophan. The catalase ifgD and the FAD-dependent oxidoreductase ifgC then transform N-methyl-dimethylallyl-L-tryptophan to chanoclavine-I which is further oxidized by ifgE in the presence of NAD(+), resulting in the formation of chanoclavine-I aldehyde. The chanoclavine-I aldehyde reductases ifgG and/or fgaOx3 reduce chanoclavine-I aldehyde to dihydrochanoclavine-I aldehyde that spontaneously dehydrates to form 6,8-dimethyl-6,7-didehydroergoline. The festuclavine dehydrogenases ifgF1 and/or ifgF2 then catalyze the reduction of 6,8-dimethyl-6,7-didehydroergoline to form festuclavine. Hydrolysis of festuclavine by a yet undetermined cytochrome P450 monooxygenase (called ifgH) then leads to the formation of isofumigaclavine B which is in turn acetylated by ifgI to isofumigaclavine A. Penicillium roqueforti has interestingly at least two sets of genes for the consumption of chanoclavine-I aldehyde on three different loci, the OYEs ifgG/fgaOx3 and the festuclavine synthase homologs ifgF1/ifgF2. The reason for the duplication of these genes is unclear, probably to ensure the conversion of chanoclavine-I aldehyde by differential gene expression under various environmental conditions. The polypeptide is 4-dimethylallyltryptophan N-methyltransferase ifgB (Penicillium roqueforti (strain FM164)).